We begin with the raw amino-acid sequence, 478 residues long: Glucose-6-phosphate 1-dehydrogenase (478 aa).

Residues R48, 86–87, and K142 each bind NADP(+); that span reads DF. Substrate-binding residues include H172, K176, E210, and D229. Residue H234 is the Proton acceptor of the active site. Substrate contacts are provided by K334 and K339.

It belongs to the glucose-6-phosphate dehydrogenase family.

It catalyses the reaction D-glucose 6-phosphate + NADP(+) = 6-phospho-D-glucono-1,5-lactone + NADPH + H(+). The protein operates within carbohydrate degradation; pentose phosphate pathway; D-ribulose 5-phosphate from D-glucose 6-phosphate (oxidative stage): step 1/3. Catalyzes the oxidation of glucose 6-phosphate to 6-phosphogluconolactone. In Borreliella burgdorferi (strain ATCC 35210 / DSM 4680 / CIP 102532 / B31) (Borrelia burgdorferi), this protein is Glucose-6-phosphate 1-dehydrogenase.